A 239-amino-acid polypeptide reads, in one-letter code: Pyridoxine 5'-phosphate synthase (239 aa).

Asparagine 7 is a binding site for 3-amino-2-oxopropyl phosphate. 9–10 contributes to the 1-deoxy-D-xylulose 5-phosphate binding site; sequence DH. 3-amino-2-oxopropyl phosphate is bound at residue arginine 18. Histidine 43 (proton acceptor) is an active-site residue. The 1-deoxy-D-xylulose 5-phosphate site is built by arginine 45 and histidine 50. Glutamate 70 (proton acceptor) is an active-site residue. Threonine 100 contributes to the 1-deoxy-D-xylulose 5-phosphate binding site. The Proton donor role is filled by histidine 191. Residues glycine 192 and 213 to 214 contribute to the 3-amino-2-oxopropyl phosphate site; that span reads GH.

This sequence belongs to the PNP synthase family. In terms of assembly, homooctamer; tetramer of dimers.

It is found in the cytoplasm. The enzyme catalyses 3-amino-2-oxopropyl phosphate + 1-deoxy-D-xylulose 5-phosphate = pyridoxine 5'-phosphate + phosphate + 2 H2O + H(+). Its pathway is cofactor biosynthesis; pyridoxine 5'-phosphate biosynthesis; pyridoxine 5'-phosphate from D-erythrose 4-phosphate: step 5/5. Its function is as follows. Catalyzes the complicated ring closure reaction between the two acyclic compounds 1-deoxy-D-xylulose-5-phosphate (DXP) and 3-amino-2-oxopropyl phosphate (1-amino-acetone-3-phosphate or AAP) to form pyridoxine 5'-phosphate (PNP) and inorganic phosphate. In Geobacter metallireducens (strain ATCC 53774 / DSM 7210 / GS-15), this protein is Pyridoxine 5'-phosphate synthase.